The primary structure comprises 150 residues: Urease accessory protein UreE (150 aa).

The protein belongs to the UreE family.

It is found in the cytoplasm. Involved in urease metallocenter assembly. Binds nickel. Probably functions as a nickel donor during metallocenter assembly. This Staphylococcus carnosus (strain TM300) protein is Urease accessory protein UreE.